The primary structure comprises 379 residues: cAMP-dependent protein kinase type I-alpha regulatory subunit (379 aa).

Residue Met-1 is modified to N-acetylmethionine. A dimerization and phosphorylation region spans residues 1–134 (MASSSTSSEE…ALAKAIEKNV (134 aa)). The interval 63–93 (QMVSQQKSSSRSDSREDEVSPPMNPVVKGRR) is disordered. Residues 94 to 98 (RRGAI) carry the Pseudophosphorylation motif motif. 3',5'-cyclic AMP-binding positions include 135-252 (LFAH…SKVS), Glu-200, Arg-209, 253-379 (ILES…SLSV), Glu-324, and Arg-333.

The protein belongs to the cAMP-dependent kinase regulatory chain family. As to quaternary structure, the inactive holoenzyme is composed of two regulatory chains and two catalytic chains. Activation by cAMP releases the two active catalytic monomers and the regulatory dimer. Interacts with PRKACA and PRKACB. Interacts with PRRC1; resulting in PKA activation. In terms of processing, the pseudophosphorylation site binds to the substrate-binding region of the catalytic chain, resulting in the inhibition of its activity.

Its subcellular location is the cell membrane. Its function is as follows. Regulatory subunit of the cAMP-dependent protein kinases involved in cAMP signaling in cells. The protein is cAMP-dependent protein kinase type I-alpha regulatory subunit (prkar1aa) of Danio rerio (Zebrafish).